Reading from the N-terminus, the 356-residue chain is UDP-N-acetylglucosamine--N-acetylmuramyl-(pentapeptide) pyrophosphoryl-undecaprenol N-acetylglucosamine transferase (356 aa).

UDP-N-acetyl-alpha-D-glucosamine contacts are provided by Ser198 and Gln289.

This sequence belongs to the glycosyltransferase 28 family. MurG subfamily.

Its subcellular location is the cell membrane. The catalysed reaction is Mur2Ac(oyl-L-Ala-gamma-D-Glu-L-Lys-D-Ala-D-Ala)-di-trans,octa-cis-undecaprenyl diphosphate + UDP-N-acetyl-alpha-D-glucosamine = beta-D-GlcNAc-(1-&gt;4)-Mur2Ac(oyl-L-Ala-gamma-D-Glu-L-Lys-D-Ala-D-Ala)-di-trans,octa-cis-undecaprenyl diphosphate + UDP + H(+). Its pathway is cell wall biogenesis; peptidoglycan biosynthesis. In terms of biological role, cell wall formation. Catalyzes the transfer of a GlcNAc subunit on undecaprenyl-pyrophosphoryl-MurNAc-pentapeptide (lipid intermediate I) to form undecaprenyl-pyrophosphoryl-MurNAc-(pentapeptide)GlcNAc (lipid intermediate II). In Streptococcus thermophilus (strain CNRZ 1066), this protein is UDP-N-acetylglucosamine--N-acetylmuramyl-(pentapeptide) pyrophosphoryl-undecaprenol N-acetylglucosamine transferase.